Here is a 71-residue protein sequence, read N- to C-terminus: Small ribosomal subunit protein bS21 (71 aa).

The protein belongs to the bacterial ribosomal protein bS21 family.

The polypeptide is Small ribosomal subunit protein bS21 (Buchnera aphidicola subsp. Cinara cedri (strain Cc)).